Here is a 305-residue protein sequence, read N- to C-terminus: UDP-3-O-acyl-N-acetylglucosamine deacetylase (305 aa).

Residues His-78, His-235, and Asp-239 each coordinate Zn(2+). His-262 serves as the catalytic Proton donor.

This sequence belongs to the LpxC family. Requires Zn(2+) as cofactor.

The catalysed reaction is a UDP-3-O-[(3R)-3-hydroxyacyl]-N-acetyl-alpha-D-glucosamine + H2O = a UDP-3-O-[(3R)-3-hydroxyacyl]-alpha-D-glucosamine + acetate. The protein operates within glycolipid biosynthesis; lipid IV(A) biosynthesis; lipid IV(A) from (3R)-3-hydroxytetradecanoyl-[acyl-carrier-protein] and UDP-N-acetyl-alpha-D-glucosamine: step 2/6. In terms of biological role, catalyzes the hydrolysis of UDP-3-O-myristoyl-N-acetylglucosamine to form UDP-3-O-myristoylglucosamine and acetate, the committed step in lipid A biosynthesis. This Citrifermentans bemidjiense (strain ATCC BAA-1014 / DSM 16622 / JCM 12645 / Bem) (Geobacter bemidjiensis) protein is UDP-3-O-acyl-N-acetylglucosamine deacetylase.